The sequence spans 520 residues: Gamma aminobutyrate transaminase 3, chloroplastic (520 aa).

The transit peptide at 1-44 directs the protein to the chloroplast; it reads MAKITSLIGSGIVAATNQVGPHVKHIPAVGNLQKQIVSDQIQVR. 172 to 173 serves as a coordination point for pyridoxal 5'-phosphate; sequence GS. Tyrosine 205 is a binding site for substrate. Aspartate 312 serves as a coordination point for pyridoxal 5'-phosphate. Substrate is bound at residue lysine 341. Lysine 341 is subject to N6-(pyridoxal phosphate)lysine.

This sequence belongs to the class-III pyridoxal-phosphate-dependent aminotransferase family. As to expression, expressed in leaves, roots, stems, flowers and fruits.

It is found in the plastid. The protein localises to the chloroplast. It catalyses the reaction 4-aminobutanoate + pyruvate = succinate semialdehyde + L-alanine. The enzyme catalyses 4-aminobutanoate + glyoxylate = succinate semialdehyde + glycine. Its function is as follows. Transaminase that degrades gamma-amino butyric acid (GABA) and uses pyruvate or glyoxylate as amino-group acceptor. Cannot use beta-alanine, ornithine, acetylornithine, serine, glycine, asparagine, glutamine, glutamate, valine, leucine, isoleucine, methionine, phenylalanine, histidine, lysine, arginine, aspartate, threonine, tyrosine, tryptophan, proline, or cysteine as amino donors. This is Gamma aminobutyrate transaminase 3, chloroplastic (GABA-TP3) from Solanum lycopersicum (Tomato).